Here is a 461-residue protein sequence, read N- to C-terminus: Fumarate hydratase class II (461 aa).

Substrate is bound by residues 97–99 (SGT), 127–130 (HPND), 137–139 (SSN), and Thr-185. The active-site Proton donor/acceptor is the His-186. Ser-316 is a catalytic residue. Substrate is bound by residues Ser-317 and 322–324 (KVN).

Belongs to the class-II fumarase/aspartase family. Fumarase subfamily. As to quaternary structure, homotetramer.

The protein localises to the cytoplasm. The catalysed reaction is (S)-malate = fumarate + H2O. It functions in the pathway carbohydrate metabolism; tricarboxylic acid cycle; (S)-malate from fumarate: step 1/1. Functionally, involved in the TCA cycle. Catalyzes the stereospecific interconversion of fumarate to L-malate. The protein is Fumarate hydratase class II of Staphylococcus aureus (strain Mu50 / ATCC 700699).